We begin with the raw amino-acid sequence, 41 residues long: Large ribosomal subunit protein bL36 (41 aa).

The protein belongs to the bacterial ribosomal protein bL36 family.

This is Large ribosomal subunit protein bL36 from Nitrobacter winogradskyi (strain ATCC 25391 / DSM 10237 / CIP 104748 / NCIMB 11846 / Nb-255).